Consider the following 1289-residue polypeptide: Ethylene-insensitive protein 2.1 (1289 aa).

A run of 5 helical transmembrane segments spans residues 18–38, 48–68, 96–116, 128–148, and 155–175; these read LLPA…PGKW, FGFD…LCQY, FLGV…ILGI, LSTC…FATL, and SFLC…GVLI. N-linked (GlcNAc...) asparagine glycosylation occurs at asparagine 185. A helical membrane pass occupies residues 199-219; that stretch reads LMSLLGASIMPHNFFLHSAIV. Residue asparagine 227 is glycosylated (N-linked (GlcNAc...) asparagine). 7 consecutive transmembrane segments (helical) span residues 235-255, 260-280, 288-308, 335-355, 356-376, 393-413, and 439-459; these read LNHF…NFVL, ANVF…MSLM, VAPF…AFSW, IIAV…GIYQ, LLIL…IPLF, FLEF…IIFV, and YIVL…LAAT. N-linked (GlcNAc...) asparagine glycosylation is present at asparagine 521. The disordered stretch occupies residues 611–659; it reads LHTEKEDDEGDNWEPEDSSKGVPGSTLSLTSDGPGSFRSLSGKSDAGGN. Positions 616-626 are enriched in acidic residues; the sequence is EDDEGDNWEPE. A compositionally biased stretch (polar residues) spans 635-652; sequence STLSLTSDGPGSFRSLSG. A phosphoserine mark is found at serine 646 and serine 663. Asparagine 745 carries an N-linked (GlcNAc...) asparagine glycan. The disordered stretch occupies residues 792–816; sequence SIADSSERRYSGVRTPPSSDGWDNQ. The segment covering 807–816 has biased composition (polar residues); that stretch reads PPSSDGWDNQ. At threonine 819 the chain carries Phosphothreonine. Residue serine 923 is modified to Phosphoserine. Asparagine 1025 carries an N-linked (GlcNAc...) asparagine glycan. Residues 1208–1227 form a disordered region; it reads HRSSPPASNGMLPPASKPGR. A Nuclear localization signal motif is present at residues 1274–1281; sequence LKRYKRRL.

It belongs to the NRAMP (TC 2.A.55) family.

It localises to the endoplasmic reticulum membrane. The protein localises to the nucleus. Its subcellular location is the cytoplasm. Its function is as follows. Central factor in signaling pathways regulated by ethylene (ET) and involved in various processes including development, plant defense, senescence, nucleotide sugar flux, and tropisms. Functionally, trafficking signal inducing ethylene response. The nuclear localization is both necessary and sufficient to activate EIN3-mediated transcription and ethylene responses. In Populus trichocarpa (Western balsam poplar), this protein is Ethylene-insensitive protein 2.1.